The chain runs to 172 residues: Large ribosomal subunit protein uL10 (172 aa).

The protein belongs to the universal ribosomal protein uL10 family. As to quaternary structure, part of the ribosomal stalk of the 50S ribosomal subunit. The N-terminus interacts with L11 and the large rRNA to form the base of the stalk. The C-terminus forms an elongated spine to which L12 dimers bind in a sequential fashion forming a multimeric L10(L12)X complex.

Functionally, forms part of the ribosomal stalk, playing a central role in the interaction of the ribosome with GTP-bound translation factors. The sequence is that of Large ribosomal subunit protein uL10 from Brucella anthropi (strain ATCC 49188 / DSM 6882 / CCUG 24695 / JCM 21032 / LMG 3331 / NBRC 15819 / NCTC 12168 / Alc 37) (Ochrobactrum anthropi).